The primary structure comprises 573 residues: Putative ABC transporter ATP-binding protein LJ_1704 (573 aa).

2 ABC transporter domains span residues 6–247 (IEFK…GVRE) and 303–536 (LKLD…ASLK). Residues 40–47 (GPSGSGKS) and 337–344 (GQNGAGKT) each bind ATP.

It belongs to the ABC transporter superfamily.

Its subcellular location is the cell membrane. Functionally, probably part of an ABC transporter complex. Responsible for energy coupling to the transport system. This is Putative ABC transporter ATP-binding protein LJ_1704 from Lactobacillus johnsonii (strain CNCM I-12250 / La1 / NCC 533).